We begin with the raw amino-acid sequence, 678 residues long: Amino-acid acetyltransferase, mitochondrial (678 aa).

The segment at 86–111 is disordered; the sequence is LKAQHPPKAQTEPTTGHSKGTVTQSL. Positions 96–111 are enriched in polar residues; the sequence is TEPTTGHSKGTVTQSL. The N-acetyltransferase domain occupies 499-668; sequence NRPRLSLDDP…YEQVCRSIQP (170 aa).

This sequence belongs to the acetyltransferase family.

It is found in the mitochondrion. The enzyme catalyses L-glutamate + acetyl-CoA = N-acetyl-L-glutamate + CoA + H(+). The protein operates within amino-acid biosynthesis; L-arginine biosynthesis; N(2)-acetyl-L-ornithine from L-glutamate: step 1/4. N-acetylglutamate synthase involved in arginine biosynthesis. The chain is Amino-acid acetyltransferase, mitochondrial (arg2) from Aspergillus oryzae (strain ATCC 42149 / RIB 40) (Yellow koji mold).